A 67-amino-acid chain; its full sequence is Large ribosomal subunit protein uL29 (67 aa).

It belongs to the universal ribosomal protein uL29 family.

The protein is Large ribosomal subunit protein uL29 of Wolbachia sp. subsp. Drosophila simulans (strain wRi).